The sequence spans 268 residues: Thiazole synthase (268 aa).

Lys100 functions as the Schiff-base intermediate with DXP in the catalytic mechanism. 1-deoxy-D-xylulose 5-phosphate contacts are provided by residues Gly161, 187 to 188 (AG), and 209 to 210 (NT). The interval 248–268 (ATPSSPSEGMITGSPHSAANN) is disordered.

The protein belongs to the ThiG family. In terms of assembly, homotetramer. Forms heterodimers with either ThiH or ThiS.

It localises to the cytoplasm. It carries out the reaction [ThiS sulfur-carrier protein]-C-terminal-Gly-aminoethanethioate + 2-iminoacetate + 1-deoxy-D-xylulose 5-phosphate = [ThiS sulfur-carrier protein]-C-terminal Gly-Gly + 2-[(2R,5Z)-2-carboxy-4-methylthiazol-5(2H)-ylidene]ethyl phosphate + 2 H2O + H(+). It participates in cofactor biosynthesis; thiamine diphosphate biosynthesis. Its function is as follows. Catalyzes the rearrangement of 1-deoxy-D-xylulose 5-phosphate (DXP) to produce the thiazole phosphate moiety of thiamine. Sulfur is provided by the thiocarboxylate moiety of the carrier protein ThiS. In vitro, sulfur can be provided by H(2)S. This Nitrosomonas eutropha (strain DSM 101675 / C91 / Nm57) protein is Thiazole synthase.